The following is an 864-amino-acid chain: Leucine--tRNA ligase (864 aa).

The short motif at 42–52 is the 'HIGH' region element; it reads PYPSGKLHMGH. The 'KMSKS' region signature appears at 624–628; sequence KMSKS. Lysine 627 provides a ligand contact to ATP.

Belongs to the class-I aminoacyl-tRNA synthetase family.

Its subcellular location is the cytoplasm. The enzyme catalyses tRNA(Leu) + L-leucine + ATP = L-leucyl-tRNA(Leu) + AMP + diphosphate. The chain is Leucine--tRNA ligase from Burkholderia thailandensis (strain ATCC 700388 / DSM 13276 / CCUG 48851 / CIP 106301 / E264).